The following is a 289-amino-acid chain: Ribosomal protein L11 methyltransferase (289 aa).

S-adenosyl-L-methionine contacts are provided by Thr-135, Gly-156, Asp-179, and Asn-225.

It belongs to the methyltransferase superfamily. PrmA family.

It localises to the cytoplasm. It catalyses the reaction L-lysyl-[protein] + 3 S-adenosyl-L-methionine = N(6),N(6),N(6)-trimethyl-L-lysyl-[protein] + 3 S-adenosyl-L-homocysteine + 3 H(+). In terms of biological role, methylates ribosomal protein L11. The sequence is that of Ribosomal protein L11 methyltransferase from Chlorobaculum tepidum (strain ATCC 49652 / DSM 12025 / NBRC 103806 / TLS) (Chlorobium tepidum).